The chain runs to 327 residues: Peroxidase N (327 aa).

Positions methionine 1–alanine 28 are cleaved as a signal peptide. Position 29 is a pyrrolidone carboxylic acid (glutamine 29). 4 disulfides stabilise this stretch: cysteine 39-cysteine 116, cysteine 72-cysteine 77, cysteine 122-cysteine 323, and cysteine 200-cysteine 232. Histidine 70 acts as the Proton acceptor in catalysis. Ca(2+) contacts are provided by aspartate 71, valine 74, glycine 76, aspartate 78, and serine 80. Residue asparagine 155 is glycosylated (N-linked (GlcNAc...) asparagine). Proline 163 is a binding site for substrate. Asparagine 182 carries N-linked (GlcNAc...) asparagine glycosylation. Residue histidine 193 participates in heme b binding. Threonine 194 is a Ca(2+) binding site. N-linked (GlcNAc...) asparagine glycans are attached at residues asparagine 209 and asparagine 239. Aspartate 245 contacts Ca(2+). Asparagine 247 carries an N-linked (GlcNAc...) asparagine glycan. Serine 248 and aspartate 253 together coordinate Ca(2+). Asparagine 281 is a glycosylation site (N-linked (GlcNAc...) asparagine).

Belongs to the peroxidase family. Classical plant (class III) peroxidase subfamily. It depends on Ca(2+) as a cofactor. The cofactor is heme b.

It localises to the secreted. It catalyses the reaction 2 a phenolic donor + H2O2 = 2 a phenolic radical donor + 2 H2O. Its function is as follows. Removal of H(2)O(2), oxidation of toxic reductants, biosynthesis and degradation of lignin, suberization, auxin catabolism, response to environmental stresses such as wounding, pathogen attack and oxidative stress. These functions might be dependent on each isozyme/isoform in each plant tissue. This chain is Peroxidase N (HRPN), found in Armoracia rusticana (Horseradish).